We begin with the raw amino-acid sequence, 508 residues long: GMP synthase [glutamine-hydrolyzing] (508 aa).

Residues 1–189 (MILVLDFGSQ…ALLVCGCEKT (189 aa)) form the Glutamine amidotransferase type-1 domain. Cys-78 (nucleophile) is an active-site residue. Residues His-163 and Glu-165 contribute to the active site. Residues 190 to 383 (WGMQHFAQRE…LGVSQDFLMH (194 aa)) enclose the GMPS ATP-PPase domain. 217 to 223 (SGGVDST) provides a ligand contact to ATP.

In terms of assembly, homodimer.

The catalysed reaction is XMP + L-glutamine + ATP + H2O = GMP + L-glutamate + AMP + diphosphate + 2 H(+). It participates in purine metabolism; GMP biosynthesis; GMP from XMP (L-Gln route): step 1/1. Functionally, catalyzes the synthesis of GMP from XMP. In Helicobacter pylori (strain G27), this protein is GMP synthase [glutamine-hydrolyzing].